The primary structure comprises 226 residues: Ribosome-recycling factor, mitochondrial (226 aa).

This sequence belongs to the RRF family.

It localises to the mitochondrion. Its function is as follows. Necessary for protein synthesis in mitochondria. Functions as a ribosome recycling factor in mitochondria. The protein is Ribosome-recycling factor, mitochondrial (RRF1) of Eremothecium gossypii (strain ATCC 10895 / CBS 109.51 / FGSC 9923 / NRRL Y-1056) (Yeast).